Reading from the N-terminus, the 322-residue chain is Atrochrysone carboxyl ACP thioesterase nsrC (322 aa).

Zn(2+)-binding residues include H105, H107, D109, and H110. The active-site Proton donor/acceptor is the D109.

This sequence belongs to the metallo-beta-lactamase superfamily. Zn(2+) serves as cofactor.

The enzyme catalyses atrochrysone carboxyl-[ACP] + H2O = atrochrysone carboxylate + holo-[ACP] + H(+). The protein operates within secondary metabolite biosynthesis. Functionally, atrochrysone carboxyl ACP thioesterase; part of the gene cluster that mediates the biosynthesis of the tetrahydroxanthone dimer neosartorin, which exhibits antibacterial activity. The two different monomeric units appear to be synthesized by the same set of enzymes, among which the Baeyer-Villiger monooxygenase nsrF is the key enzyme for the divergence of the biosynthetic routes. The pathway begins with the synthesis of atrochrysone thioester by the polyketide synthase nsrB. The atrochrysone carboxyl ACP thioesterase nsrC then breaks the thioester bond and releases the atrochrysone carboxylic acid from AacuL. Atrochrysone carboxylic acid is decarboxylated by the decarboxylase nsrE, and oxidized by the anthrone oxygenase nsrD to yield emodin. Emodin is then reduced to emodin hydroquinone by the oxidoreductase nsrR. A-ring reduction by the short chain dehydrogenase nsrJ, dehydration by the scytalone dehydratase-like protein nsrI and probable spontaneous re-oxidation, results in overall deoxygenation to chrysophanol. The Baeyer-Villiger monooxygenase nsrF accepts chrysophanol as a substrate to insert one oxygen atom at two different positions to yield the precursors of both monomric units. NsrF is promiscuous/flexible in interacting with the 2 (non methylated and methylated) aromatic rings of chrysophanol, thus diverging the biosynthetic pathway at this point. After the hydrolysis of the lactones, methylesterification by the methyltransferase nsrG yields respectively moniliphenone and 2,2',6'-trihydroxy-4-methyl-6-methoxya-cyldiphenylmethanone. The next steps are the hydroxylation by the FAD-dependent monooxygenase nsrK, followed by isomerization by the monooxygenase nsrQ. The short chain dehydrogenase/reductase nsrO then catalyzes the C-5 ketoreduction to give the xanthone skeleton of blennolide C and 5-acetylblennolide A. The acetyltransferase nsrL has a strict substrate specificity and uses only blennolide A but not blennolide C to yield 5-acetylblennolide A as the single-acetylated product. In the final step of the biosynthesis, the heterodimerization of the 2 xanthones, blennolide C and 5-acetylblennolide A, is catalyzed by the cytochrome P450 monooxygenase nsrP. NsrP can utilize at least three different xanthones as its substrates to perform the dimerization reaction. The chain is Atrochrysone carboxyl ACP thioesterase nsrC from Aspergillus novofumigatus (strain IBT 16806).